The primary structure comprises 131 residues: Small ribosomal subunit protein uS19 (131 aa).

The protein belongs to the universal ribosomal protein uS19 family.

Its function is as follows. Protein S19 forms a complex with S13 that binds strongly to the 16S ribosomal RNA. The polypeptide is Small ribosomal subunit protein uS19 (Nitrosopumilus maritimus (strain SCM1)).